The chain runs to 939 residues: Valine--tRNA ligase (939 aa).

The short motif at 47 to 57 is the 'HIGH' region element; it reads PNVTGILHMGH. The 'KMSKS' region signature appears at 563–567; that stretch reads KLSKS. Lys-566 serves as a coordination point for ATP. Positions 874–939 form a coiled coil; that stretch reads EHLAKERVRL…QSILDKLASL (66 aa).

The protein belongs to the class-I aminoacyl-tRNA synthetase family. ValS type 1 subfamily. Monomer.

The protein localises to the cytoplasm. The catalysed reaction is tRNA(Val) + L-valine + ATP = L-valyl-tRNA(Val) + AMP + diphosphate. In terms of biological role, catalyzes the attachment of valine to tRNA(Val). As ValRS can inadvertently accommodate and process structurally similar amino acids such as threonine, to avoid such errors, it has a 'posttransfer' editing activity that hydrolyzes mischarged Thr-tRNA(Val) in a tRNA-dependent manner. This chain is Valine--tRNA ligase, found in Chlamydia trachomatis serovar A (strain ATCC VR-571B / DSM 19440 / HAR-13).